We begin with the raw amino-acid sequence, 430 residues long: Putative FBD-associated F-box protein At5g56440 (430 aa).

One can recognise an F-box domain in the interval 1-49 (MDRISLLPDDVVFKILSFVPTKVVVSTNLLSKRWRYLWKHVPKLDYRDP). The region spanning 349–399 (QWEQPSSVPKCLISSLETVEWIDYKGREVEKKVVMYLLENSRQLKTMAIRS) is the FBD domain.

This is Putative FBD-associated F-box protein At5g56440 from Arabidopsis thaliana (Mouse-ear cress).